We begin with the raw amino-acid sequence, 246 residues long: uncharacterized protein (246 aa).

The N-terminal stretch at 1 to 30 (MKKKQVSHAIIISVMLSFVIAVFHTIHASE) is a signal peptide.

This is an uncharacterized protein from Bacillus subtilis (strain 168).